The following is a 471-amino-acid chain: Putative multidrug resistance protein MdtD (471 aa).

Over 1–11 the chain is Periplasmic; it reads MTDLPDSTRWQ. The chain crosses the membrane as a helical span at residues 12 to 32; it reads LWIVAFGFFMQSLDTTIVNTA. Over 33–48 the chain is Cytoplasmic; sequence LPSMAQSLGESPLHMH. A helical membrane pass occupies residues 49 to 69; it reads MVIVSYVLTVAVMLPASGWLA. At 70-76 the chain is on the periplasmic side; the sequence is DKVGVRN. The chain crosses the membrane as a helical span at residues 77–97; it reads IFFTAIVLFTLGSLFCALSGT. The Cytoplasmic segment spans residues 98-101; that stretch reads LNEL. A helical membrane pass occupies residues 102 to 124; it reads LLARALQGVGGAMMVPVGRLTVM. Topologically, residues 125-137 are periplasmic; the sequence is KIVPREQYMAAMT. A helical membrane pass occupies residues 138–158; it reads FVTLPGQVGPLLGPALGGLLV. Residues 159–164 are Cytoplasmic-facing; it reads EYASWH. The helical transmembrane segment at 165 to 185 threads the bilayer; the sequence is WIFLINIPVGIIGAIATLMLM. Residues 186-196 are Periplasmic-facing; that stretch reads PNYTMQTRRFD. Residues 197-217 form a helical membrane-spanning segment; that stretch reads LSGFLLLAVGMAVLTLALDGS. The Cytoplasmic segment spans residues 218-224; that stretch reads KGTGLSP. The helical transmembrane segment at 225-245 threads the bilayer; sequence LAITGLVAVGVVALVLYLLHA. The Periplasmic segment spans residues 246 to 262; the sequence is RNNHRALFSLKLFRTRT. Residues 263–283 form a helical membrane-spanning segment; the sequence is FSLGLAGSFAGRIGSGMLPFM. Residues 284–285 lie on the Cytoplasmic side of the membrane; sequence TP. A helical transmembrane segment spans residues 286–306; it reads VFLQIGLGFSPFHAGLMMIPM. At 307–341 the chain is on the periplasmic side; that stretch reads VLGSMGMKRIVVQVVNRFGYRRVLVATTLGLSLVT. The helical transmembrane segment at 342–362 threads the bilayer; sequence LLFMTTALLGWYYVLPFVLFL. Topologically, residues 363–395 are cytoplasmic; sequence QGMVNSTRFSSMNTLTLKDLPDNLASSGNSLLS. The helical transmembrane segment at 396 to 416 threads the bilayer; the sequence is MIMQLSMSIGVTIAGLLLGLF. Topologically, residues 417–430 are periplasmic; the sequence is GSQHVSVDSGTTQT. A helical transmembrane segment spans residues 431 to 451; that stretch reads VFMYTWLSMAFIIALPAFIFA. Residues 452 to 471 are Cytoplasmic-facing; sequence RVPNDTHQNVAISRRKRSAQ.

Belongs to the major facilitator superfamily. TCR/Tet family.

The protein localises to the cell inner membrane. In Escherichia coli O127:H6 (strain E2348/69 / EPEC), this protein is Putative multidrug resistance protein MdtD.